Reading from the N-terminus, the 297-residue chain is Bifunctional protein FolD (297 aa).

NADP(+) is bound by residues 164–166 (GRS), S193, and I234.

Belongs to the tetrahydrofolate dehydrogenase/cyclohydrolase family. As to quaternary structure, homodimer.

The catalysed reaction is (6R)-5,10-methylene-5,6,7,8-tetrahydrofolate + NADP(+) = (6R)-5,10-methenyltetrahydrofolate + NADPH. It catalyses the reaction (6R)-5,10-methenyltetrahydrofolate + H2O = (6R)-10-formyltetrahydrofolate + H(+). It participates in one-carbon metabolism; tetrahydrofolate interconversion. In terms of biological role, catalyzes the oxidation of 5,10-methylenetetrahydrofolate to 5,10-methenyltetrahydrofolate and then the hydrolysis of 5,10-methenyltetrahydrofolate to 10-formyltetrahydrofolate. This is Bifunctional protein FolD from Halobacterium salinarum (strain ATCC 700922 / JCM 11081 / NRC-1) (Halobacterium halobium).